A 428-amino-acid polypeptide reads, in one-letter code: UPF0053 inner membrane protein YfjD (428 aa).

Residues Met-1–His-3 lie on the Cytoplasmic side of the membrane. The region spanning Glu-2–Met-192 is the CNNM transmembrane domain. A helical membrane pass occupies residues Ile-4–Ser-24. Topologically, residues Gly-25–Ser-64 are periplasmic. The chain crosses the membrane as a helical span at residues Leu-65–Gly-85. Residues Met-86–Asp-91 are Cytoplasmic-facing. A helical transmembrane segment spans residues Ala-92–Leu-112. Topologically, residues Pro-113 to Ser-129 are periplasmic. The chain crosses the membrane as a helical span at residues Phe-130–Thr-150. Residues Arg-151–Glu-428 lie on the Cytoplasmic side of the membrane. CBS domains lie at Met-208–Glu-270 and Met-272–Ser-332.

Belongs to the UPF0053 family.

Its subcellular location is the cell inner membrane. The protein is UPF0053 inner membrane protein YfjD (yfjD) of Escherichia coli (strain K12).